Here is a 67-residue protein sequence, read N- to C-terminus: Small ribosomal subunit protein eS27 (67 aa).

Positions 22, 25, 41, and 44 each coordinate Zn(2+). The C4-type zinc-finger motif lies at 22–44 (CPDCGNEQVTFSHAAMVVRCLVC).

This sequence belongs to the eukaryotic ribosomal protein eS27 family. In terms of assembly, part of the 30S ribosomal subunit. The cofactor is Zn(2+).

This is Small ribosomal subunit protein eS27 from Pyrobaculum neutrophilum (strain DSM 2338 / JCM 9278 / NBRC 100436 / V24Sta) (Thermoproteus neutrophilus).